The chain runs to 339 residues: Pleckstrin homology domain protein opy1 (339 aa).

The PH 1 domain occupies 25-119; the sequence is RVLKSGWLIK…WVHVLRSTTG (95 aa). Residues 141-167 are compositionally biased toward polar residues; the sequence is ESEPNVQISDTDFDNISTEPRNQTTSP. Residues 141-170 are disordered; the sequence is ESEPNVQISDTDFDNISTEPRNQTTSPLDL. Positions 233–330 constitute a PH 2 domain; the sequence is KVLMQGTIHW…WVAALKTSID (98 aa).

As to quaternary structure, interacts (via domain PH 1) with phosphatidylinositol 4-phosphate 5-kinase its3; the interaction is direct but opy1 does not appear to regulate its3 localization or function.

The protein resides in the cell tip. The protein localises to the cell membrane. Binds phosphatidylinositol 4,5-bisphosphate (PtdIns(4,5)P2/PIP2) at the cell membrane. The sequence is that of Pleckstrin homology domain protein opy1 from Schizosaccharomyces pombe (strain 972 / ATCC 24843) (Fission yeast).